The chain runs to 62 residues: Large ribosomal subunit protein eL19 (62 aa).

This sequence belongs to the eukaryotic ribosomal protein eL19 family.

The chain is Large ribosomal subunit protein eL19 (RPL19) from Zea mays (Maize).